A 131-amino-acid polypeptide reads, in one-letter code: Superoxide dismutase [Ni] (131 aa).

Positions Met-1–Ala-14 are excised as a propeptide. Residues His-15, Cys-16, and Cys-20 each coordinate Ni(2+).

The protein belongs to the nickel superoxide dismutase family. As to quaternary structure, homohexamer. The hexameric protein has roughly the shape of a hollow sphere with an outer diameter of 72 Angstroms and a large inner cavity. Ni(2+) is required as a cofactor.

The protein resides in the cytoplasm. The catalysed reaction is 2 superoxide + 2 H(+) = H2O2 + O2. In Streptomyces seoulensis, this protein is Superoxide dismutase [Ni] (sodN).